A 247-amino-acid polypeptide reads, in one-letter code: Ribosomal RNA large subunit methyltransferase E (247 aa).

Residues 1-21 (MKKTTKKTAGGYGGSGSHKLY) form a disordered region. 5 residues coordinate S-adenosyl-L-methionine: G88, W90, D111, D127, and D151. K191 acts as the Proton acceptor in catalysis.

This sequence belongs to the class I-like SAM-binding methyltransferase superfamily. RNA methyltransferase RlmE family.

It localises to the cytoplasm. The catalysed reaction is uridine(2552) in 23S rRNA + S-adenosyl-L-methionine = 2'-O-methyluridine(2552) in 23S rRNA + S-adenosyl-L-homocysteine + H(+). In terms of biological role, specifically methylates the uridine in position 2552 of 23S rRNA at the 2'-O position of the ribose in the fully assembled 50S ribosomal subunit. The sequence is that of Ribosomal RNA large subunit methyltransferase E from Bartonella henselae (strain ATCC 49882 / DSM 28221 / CCUG 30454 / Houston 1) (Rochalimaea henselae).